The chain runs to 140 residues: Nucleoside diphosphate kinase (140 aa).

6 residues coordinate ATP: Lys11, Phe59, Arg87, Thr93, Arg104, and Asn114. The active-site Pros-phosphohistidine intermediate is His117.

The protein belongs to the NDK family. In terms of assembly, homotetramer. It depends on Mg(2+) as a cofactor.

It localises to the cytoplasm. It carries out the reaction a 2'-deoxyribonucleoside 5'-diphosphate + ATP = a 2'-deoxyribonucleoside 5'-triphosphate + ADP. It catalyses the reaction a ribonucleoside 5'-diphosphate + ATP = a ribonucleoside 5'-triphosphate + ADP. Major role in the synthesis of nucleoside triphosphates other than ATP. The ATP gamma phosphate is transferred to the NDP beta phosphate via a ping-pong mechanism, using a phosphorylated active-site intermediate. In Rhodopseudomonas palustris (strain BisB5), this protein is Nucleoside diphosphate kinase.